The sequence spans 221 residues: Guanylate kinase (221 aa).

Positions 20–198 (GSLFMVVAPS…ALAELRTVVQ (179 aa)) constitute a Guanylate kinase-like domain. Residue 27-34 (APSGAGKS) coordinates ATP.

This sequence belongs to the guanylate kinase family.

The protein localises to the cytoplasm. It catalyses the reaction GMP + ATP = GDP + ADP. Its function is as follows. Essential for recycling GMP and indirectly, cGMP. The polypeptide is Guanylate kinase (Ralstonia nicotianae (strain ATCC BAA-1114 / GMI1000) (Ralstonia solanacearum)).